Here is a 325-residue protein sequence, read N- to C-terminus: Glycerol-3-phosphate dehydrogenase [NAD(P)+] (325 aa).

NADPH contacts are provided by tryptophan 15, arginine 35, and lysine 107. Positions 107, 135, and 137 each coordinate sn-glycerol 3-phosphate. Position 139 (alanine 139) interacts with NADPH. Sn-glycerol 3-phosphate is bound by residues lysine 190, aspartate 243, serine 253, arginine 254, and asparagine 255. Lysine 190 functions as the Proton acceptor in the catalytic mechanism. Arginine 254 contacts NADPH. The NADPH site is built by leucine 272 and glutamate 274.

Belongs to the NAD-dependent glycerol-3-phosphate dehydrogenase family.

Its subcellular location is the cytoplasm. The catalysed reaction is sn-glycerol 3-phosphate + NAD(+) = dihydroxyacetone phosphate + NADH + H(+). It catalyses the reaction sn-glycerol 3-phosphate + NADP(+) = dihydroxyacetone phosphate + NADPH + H(+). The protein operates within membrane lipid metabolism; glycerophospholipid metabolism. Functionally, catalyzes the reduction of the glycolytic intermediate dihydroxyacetone phosphate (DHAP) to sn-glycerol 3-phosphate (G3P), the key precursor for phospholipid synthesis. The protein is Glycerol-3-phosphate dehydrogenase [NAD(P)+] of Afipia carboxidovorans (strain ATCC 49405 / DSM 1227 / KCTC 32145 / OM5) (Oligotropha carboxidovorans).